The sequence spans 850 residues: MCCEKWSHVAEMLLFIEDREEEYKILCLCSRAFVEDRKLYNLGLKGYYVKSSGNNAGDRVTEEEEDDHSSGTTESHSADEGDLDPEAKLMRSMGLPVRFGRMSTHGSFEVSMNARNKAKVRQKRRKHRKQYLDEIVREDWRNDCEEDDLVVSDDPSSVEHCENNSACEIQSKTDAEAENLPVENTLAPKLEVTENWEKYWNEYGEGLLWQSWQEKYPDQTLSSEPWNLPDTKEEWEQHYSQLYWYYLEQFQYWEAQGWTFVASQNCDKDVCTSHTQVDQNAESSLKADGTTLSSSPNTAEDESLGSNDNDHNEIIAGINKITLSAEEVEQSQLDSSEHCDKPLSEVTGKECPASGGSDSCHGTPKESDISENRSSDQPAQELQESSGTNTSKHRPHHNGTDGNESEDDPPDHKPSKMKRSHELDIDENPDSEVDDNGFHLGFKHGSGQKYGGIPNFSRRQVRYLEKNVKYKSKYLDMRKRMTVKNKHIVFSEESGKPFIRKSKVRSKVEKFLKWVNEPVDEEISQEPLSHNKMQDTCTSSDSEEQDMSMEKTDGLMETRDPEPENCQTISSASELEAEKSEGGSLVAAVPENCSTEGVANSPRAEAEVEIKKKKKKKKKNKNKKINGLPPEIASVPELAKYWAQRYRLFSRFDDGIKLDKEGWFSVTPEKIAEHIAGRVSQSFNCDIIVDAFCGVGGNTIQFALTGKRVIAIDIDPVKIDLARNNAEVYGVADKIEFICGDFLLLAPCLKADVVFLSPPWGGPDYATAETFDIRTMMSPDGFEIFRLSQKITNNIVYFLPRNADVDQVASLAGPGGQVEIEQNFLNNKLKTITAYFGDLIRRPALRSAEA.

Residues 54–85 (NNAGDRVTEEEEDDHSSGTTESHSADEGDLDP) are disordered. The residue at position 61 (Thr61) is a Phosphothreonine. A phosphoserine mark is found at Ser92 and Ser152. 3 disordered regions span residues 278–311 (DQNAESSLKADGTTLSSSPNTAEDESLGSNDNDH), 327–454 (EVEQ…GGIP), and 523–566 (ISQE…PENC). The span at 363–374 (TPKESDISENRS) shows a compositional bias: basic and acidic residues. Polar residues predominate over residues 375–390 (SDQPAQELQESSGTNT). Residues Ser405 and Ser431 each carry the phosphoserine modification. The segment covering 424-435 (DIDENPDSEVDD) has biased composition (acidic residues). Over residues 548-562 (SMEKTDGLMETRDPE) the composition is skewed to basic and acidic residues. Ser571 carries the post-translational modification Phosphoserine. A disordered region spans residues 595–628 (TEGVANSPRAEAEVEIKKKKKKKKKNKNKKINGL). Positions 611-624 (KKKKKKKKKNKNKK) are enriched in basic residues. Asp713 is a binding site for S-adenosyl-L-methionine.

Belongs to the methyltransferase superfamily. Trimethylguanosine synthase family. In terms of assembly, may form homooligomers. Interacts with CREBBP/CBP, EED/WAIT1, EP300/P300, NCOA6/PRIP, PPARBP/PBP and SMN. In terms of tissue distribution, a 55 kDa isoform is widely expressed while a 90 kDa isoform is detected exclusively in brain and testis (at protein level).

It localises to the cytoplasm. The protein localises to the nucleus. The protein resides in the cajal body. Its subcellular location is the nucleolus. The enzyme catalyses a 5'-end (N(7)-methyl 5'-triphosphoguanosine)-ribonucleoside in snRNA + S-adenosyl-L-methionine = a 5'-end (N(2),N(7)-dimethyl 5'-triphosphoguanosine)-ribonucleoside in snRNA + S-adenosyl-L-homocysteine + H(+). It catalyses the reaction a 5'-end (N(7)-methyl 5'-triphosphoguanosine)-ribonucleoside in snoRNA + S-adenosyl-L-methionine = a 5'-end (N(2),N(7)-dimethyl 5'-triphosphoguanosine)-ribonucleoside in snoRNA + S-adenosyl-L-homocysteine + H(+). It carries out the reaction a 5'-end (N(2),N(7)-dimethyl 5'-triphosphoguanosine)-ribonucleoside in snRNA + S-adenosyl-L-methionine = a 5'-end (N(2),N(2),N(7)-trimethyl 5'-triphosphoguanosine)-ribonucleoside in snRNA + S-adenosyl-L-homocysteine + H(+). The catalysed reaction is a 5'-end (N(2),N(7)-dimethyl 5'-triphosphoguanosine)-ribonucleoside in snoRNA + S-adenosyl-L-methionine = a 5'-end (N(2),N(2),N(7)-trimethyl 5'-triphosphoguanosine)-ribonucleoside in snoRNA + S-adenosyl-L-homocysteine + H(+). Its function is as follows. Catalyzes the 2 serial methylation steps for the conversion of the 7-monomethylguanosine (m(7)G) caps of snRNAs and snoRNAs to a 2,2,7-trimethylguanosine (m(2,2,7)G) cap structure. The enzyme is specific for guanine, and N7 methylation must precede N2 methylation. Hypermethylation of the m7G cap of U snRNAs leads to their concentration in nuclear foci, their colocalization with coilin and the formation of canonical Cajal bodies (CBs). Plays a role in transcriptional regulation. The protein is Trimethylguanosine synthase of Rattus norvegicus (Rat).